Reading from the N-terminus, the 343-residue chain is Heat-inducible transcription repressor HrcA (343 aa).

This sequence belongs to the HrcA family.

Its function is as follows. Negative regulator of class I heat shock genes (grpE-dnaK-dnaJ and groELS operons). Prevents heat-shock induction of these operons. This chain is Heat-inducible transcription repressor HrcA, found in Halalkalibacterium halodurans (strain ATCC BAA-125 / DSM 18197 / FERM 7344 / JCM 9153 / C-125) (Bacillus halodurans).